Consider the following 152-residue polypeptide: D-aminoacyl-tRNA deacylase (152 aa).

Positions 142–143 match the Gly-cisPro motif, important for rejection of L-amino acids motif; it reads GP.

The protein belongs to the DTD family. Homodimer.

The protein localises to the cytoplasm. It catalyses the reaction glycyl-tRNA(Ala) + H2O = tRNA(Ala) + glycine + H(+). The catalysed reaction is a D-aminoacyl-tRNA + H2O = a tRNA + a D-alpha-amino acid + H(+). In terms of biological role, an aminoacyl-tRNA editing enzyme that deacylates mischarged D-aminoacyl-tRNAs. Also deacylates mischarged glycyl-tRNA(Ala), protecting cells against glycine mischarging by AlaRS. Acts via tRNA-based rather than protein-based catalysis; rejects L-amino acids rather than detecting D-amino acids in the active site. By recycling D-aminoacyl-tRNA to D-amino acids and free tRNA molecules, this enzyme counteracts the toxicity associated with the formation of D-aminoacyl-tRNA entities in vivo and helps enforce protein L-homochirality. The sequence is that of D-aminoacyl-tRNA deacylase from Burkholderia lata (strain ATCC 17760 / DSM 23089 / LMG 22485 / NCIMB 9086 / R18194 / 383).